We begin with the raw amino-acid sequence, 607 residues long: DNA mismatch repair protein MutL (607 aa).

It belongs to the DNA mismatch repair MutL/HexB family.

This protein is involved in the repair of mismatches in DNA. It is required for dam-dependent methyl-directed DNA mismatch repair. May act as a 'molecular matchmaker', a protein that promotes the formation of a stable complex between two or more DNA-binding proteins in an ATP-dependent manner without itself being part of a final effector complex. The sequence is that of DNA mismatch repair protein MutL from Anaeromyxobacter dehalogenans (strain 2CP-1 / ATCC BAA-258).